A 943-amino-acid chain; its full sequence is Isoleucine--tRNA ligase (943 aa).

A 'HIGH' region motif is present at residues 58–68; the sequence is PYANGNIHIGH. Glutamate 567 serves as a coordination point for L-isoleucyl-5'-AMP. A 'KMSKS' region motif is present at residues 608-612; sequence KMSKS. Lysine 611 is a binding site for ATP. Cysteine 906, cysteine 909, cysteine 926, and cysteine 929 together coordinate Zn(2+).

The protein belongs to the class-I aminoacyl-tRNA synthetase family. IleS type 1 subfamily. In terms of assembly, monomer. Zn(2+) serves as cofactor.

The protein localises to the cytoplasm. It catalyses the reaction tRNA(Ile) + L-isoleucine + ATP = L-isoleucyl-tRNA(Ile) + AMP + diphosphate. In terms of biological role, catalyzes the attachment of isoleucine to tRNA(Ile). As IleRS can inadvertently accommodate and process structurally similar amino acids such as valine, to avoid such errors it has two additional distinct tRNA(Ile)-dependent editing activities. One activity is designated as 'pretransfer' editing and involves the hydrolysis of activated Val-AMP. The other activity is designated 'posttransfer' editing and involves deacylation of mischarged Val-tRNA(Ile). The polypeptide is Isoleucine--tRNA ligase (Azotobacter vinelandii (strain DJ / ATCC BAA-1303)).